We begin with the raw amino-acid sequence, 136 residues long: Putative pre-16S rRNA nuclease (136 aa).

This sequence belongs to the YqgF nuclease family.

It localises to the cytoplasm. In terms of biological role, could be a nuclease involved in processing of the 5'-end of pre-16S rRNA. This Francisella tularensis subsp. holarctica (strain FTNF002-00 / FTA) protein is Putative pre-16S rRNA nuclease.